The following is a 456-amino-acid chain: Phosphomannomutase (456 aa).

Catalysis depends on Ser98, which acts as the Phosphoserine intermediate. Ser98, Asp245, Asp247, and Asp249 together coordinate Mg(2+).

This sequence belongs to the phosphohexose mutase family. The cofactor is Mg(2+).

It carries out the reaction alpha-D-mannose 1-phosphate = D-mannose 6-phosphate. Its pathway is nucleotide-sugar biosynthesis; GDP-alpha-D-mannose biosynthesis; alpha-D-mannose 1-phosphate from D-fructose 6-phosphate: step 2/2. Functionally, involved in the biosynthesis of the capsular polysaccharide colanic acid. This chain is Phosphomannomutase (manB), found in Escherichia coli (strain K12).